Here is a 402-residue protein sequence, read N- to C-terminus: Probable tRNA sulfurtransferase (402 aa).

Residues 61 to 166 enclose the THUMP domain; it reads EEIMKRISKV…SDAAYLYSRV (106 aa). Residues 184 to 185, 209 to 210, Arg266, Gly288, and Gln297 each bind ATP; these read ML and HF.

Belongs to the ThiI family.

The protein localises to the cytoplasm. It carries out the reaction [ThiI sulfur-carrier protein]-S-sulfanyl-L-cysteine + a uridine in tRNA + 2 reduced [2Fe-2S]-[ferredoxin] + ATP + H(+) = [ThiI sulfur-carrier protein]-L-cysteine + a 4-thiouridine in tRNA + 2 oxidized [2Fe-2S]-[ferredoxin] + AMP + diphosphate. It catalyses the reaction [ThiS sulfur-carrier protein]-C-terminal Gly-Gly-AMP + S-sulfanyl-L-cysteinyl-[cysteine desulfurase] + AH2 = [ThiS sulfur-carrier protein]-C-terminal-Gly-aminoethanethioate + L-cysteinyl-[cysteine desulfurase] + A + AMP + 2 H(+). It participates in cofactor biosynthesis; thiamine diphosphate biosynthesis. Catalyzes the ATP-dependent transfer of a sulfur to tRNA to produce 4-thiouridine in position 8 of tRNAs, which functions as a near-UV photosensor. Also catalyzes the transfer of sulfur to the sulfur carrier protein ThiS, forming ThiS-thiocarboxylate. This is a step in the synthesis of thiazole, in the thiamine biosynthesis pathway. The sulfur is donated as persulfide by IscS. The polypeptide is Probable tRNA sulfurtransferase (Macrococcus caseolyticus (strain JCSC5402) (Macrococcoides caseolyticum)).